Here is a 92-residue protein sequence, read N- to C-terminus: UPF0250 protein CGSHiEE_03170 (92 aa).

It belongs to the UPF0250 family.

This Haemophilus influenzae (strain PittEE) protein is UPF0250 protein CGSHiEE_03170.